Consider the following 138-residue polypeptide: ATP synthase epsilon chain (138 aa).

It belongs to the ATPase epsilon chain family. As to quaternary structure, F-type ATPases have 2 components, CF(1) - the catalytic core - and CF(0) - the membrane proton channel. CF(1) has five subunits: alpha(3), beta(3), gamma(1), delta(1), epsilon(1). CF(0) has three main subunits: a, b and c.

The protein resides in the cell inner membrane. Functionally, produces ATP from ADP in the presence of a proton gradient across the membrane. This chain is ATP synthase epsilon chain, found in Polaromonas naphthalenivorans (strain CJ2).